A 601-amino-acid chain; its full sequence is Terpinolene synthase, chloroplastic (601 aa).

Residues 1 to 32 (MSTFVISNSMHVGISFSFLHKLPQTPPPQVVC) constitute a chloroplast transit peptide. 5 residues coordinate Mg(2+): Asp-354, Asp-358, Asp-498, Thr-502, and Glu-506. A DDXXD motif motif is present at residues 354–358 (DDVYD).

This sequence belongs to the terpene synthase family. Tpsd subfamily. Mg(2+) serves as cofactor. The cofactor is Mn(2+).

It localises to the plastid. It is found in the chloroplast. The catalysed reaction is (2E)-geranyl diphosphate = terpinolene + diphosphate. Its pathway is secondary metabolite biosynthesis; terpenoid biosynthesis. Monoterpene synthase that catalyzes the formation of terpinolene and other monoterpenes from geranyl diphosphate. The polypeptide is Terpinolene synthase, chloroplastic (TES) (Ocimum basilicum (Sweet basil)).